A 311-amino-acid polypeptide reads, in one-letter code: L-lactate dehydrogenase 2 (311 aa).

Residues Val-14, Asp-35, and Arg-40 each contribute to the NAD(+) site. Residue Arg-90 participates in substrate binding. NAD(+)-binding positions include Ser-103, 120–122, and Thr-145; that span reads ATN. 122–125 provides a ligand contact to substrate; that stretch reads NPCD. 150–153 is a substrate binding site; sequence DTTR. The active-site Proton acceptor is His-177. Residue Thr-230 coordinates substrate.

The protein belongs to the LDH/MDH superfamily. LDH family. Homotetramer.

It localises to the cytoplasm. It catalyses the reaction (S)-lactate + NAD(+) = pyruvate + NADH + H(+). The protein operates within fermentation; pyruvate fermentation to lactate; (S)-lactate from pyruvate: step 1/1. Its function is as follows. Catalyzes the conversion of lactate to pyruvate. The protein is L-lactate dehydrogenase 2 of Listeria innocua serovar 6a (strain ATCC BAA-680 / CLIP 11262).